Consider the following 218-residue polypeptide: Hypoxanthine-guanine phosphoribosyltransferase (218 aa).

An N-acetylalanine modification is found at A2. K69 provides a ligand contact to GMP. K103 carries the post-translational modification N6-acetyllysine. A Glycyl lysine isopeptide (Lys-Gly) (interchain with G-Cter in SUMO1); alternate cross-link involves residue K115. A Glycyl lysine isopeptide (Lys-Gly) (interchain with G-Cter in SUMO2); alternate cross-link involves residue K115. GMP is bound by residues 134 to 142 (EDIIDTGKT), K166, 186 to 188 (KFV), and D194. The active-site Proton acceptor is the D138. T142 is modified (phosphothreonine). D194 provides a ligand contact to Mg(2+).

The protein belongs to the purine/pyrimidine phosphoribosyltransferase family. As to quaternary structure, homotetramer. The cofactor is Mg(2+).

It is found in the cytoplasm. The enzyme catalyses IMP + diphosphate = hypoxanthine + 5-phospho-alpha-D-ribose 1-diphosphate. It catalyses the reaction GMP + diphosphate = guanine + 5-phospho-alpha-D-ribose 1-diphosphate. It functions in the pathway purine metabolism; IMP biosynthesis via salvage pathway; IMP from hypoxanthine: step 1/1. Functionally, converts guanine to guanosine monophosphate, and hypoxanthine to inosine monophosphate. Transfers the 5-phosphoribosyl group from 5-phosphoribosylpyrophosphate onto the purine. Plays a central role in the generation of purine nucleotides through the purine salvage pathway. The protein is Hypoxanthine-guanine phosphoribosyltransferase (HPRT1) of Bos taurus (Bovine).